We begin with the raw amino-acid sequence, 276 residues long: MTLWEMFTAAVLGIVEGLTEYAPVSSTGHMIIADDIWLKSGSLMNPEAANSFKVVIQLGSILAVAIVFKDRILHLLGLKKNVTRDQQKGYRLTIAQIAVGLVPAAVLGFLFEDFIDRYLFSVRTVAYGLIAGAVLMLIADWINKRKETIDTVDRITYKQAFCVGLFQCLALWPGFSRSGSTIAGGVIVGLNHRAAADFTFIMAIPIMAGASLLKLVKYWSSLSYDMIPFFLVGFICAFVVALLVVKFFLRLINRIKLVPFAIYRVILGIILIMLVR.

Transmembrane regions (helical) follow at residues 48 to 68, 92 to 112, 119 to 139, 155 to 175, 196 to 216, 229 to 249, and 255 to 275; these read AANSFKVVIQLGSILAVAIVF, LTIAQIAVGLVPAAVLGFLFE, LFSVRTVAYGLIAGAVLMLIA, ITYKQAFCVGLFQCLALWPGF, ADFTFIMAIPIMAGASLLKLV, FFLVGFICAFVVALLVVKFFL, and IKLVPFAIYRVILGIILIMLV.

This sequence belongs to the UppP family.

It is found in the cell membrane. The enzyme catalyses di-trans,octa-cis-undecaprenyl diphosphate + H2O = di-trans,octa-cis-undecaprenyl phosphate + phosphate + H(+). Its function is as follows. Catalyzes the dephosphorylation of undecaprenyl diphosphate (UPP). Confers resistance to bacitracin. This chain is Undecaprenyl-diphosphatase, found in Bacillus velezensis (strain DSM 23117 / BGSC 10A6 / LMG 26770 / FZB42) (Bacillus amyloliquefaciens subsp. plantarum).